A 498-amino-acid chain; its full sequence is Lysine--tRNA ligase (498 aa).

Mg(2+) contacts are provided by Glu407 and Glu414.

The protein belongs to the class-II aminoacyl-tRNA synthetase family. As to quaternary structure, homodimer. The cofactor is Mg(2+).

It localises to the cytoplasm. It carries out the reaction tRNA(Lys) + L-lysine + ATP = L-lysyl-tRNA(Lys) + AMP + diphosphate. The chain is Lysine--tRNA ligase from Rhizobium etli (strain ATCC 51251 / DSM 11541 / JCM 21823 / NBRC 15573 / CFN 42).